A 625-amino-acid chain; its full sequence is tRNA uridine 5-carboxymethylaminomethyl modification enzyme MnmG (625 aa).

Residue 14–19 (GAGHAG) coordinates FAD. 273 to 287 (GPRYCPSIEDKIVRF) contributes to the NAD(+) binding site.

It belongs to the MnmG family. Homodimer. Heterotetramer of two MnmE and two MnmG subunits. FAD serves as cofactor.

It is found in the cytoplasm. In terms of biological role, NAD-binding protein involved in the addition of a carboxymethylaminomethyl (cmnm) group at the wobble position (U34) of certain tRNAs, forming tRNA-cmnm(5)s(2)U34. This is tRNA uridine 5-carboxymethylaminomethyl modification enzyme MnmG from Clostridium botulinum (strain Loch Maree / Type A3).